Consider the following 964-residue polypeptide: Translation initiation factor IF-2 (964 aa).

Low complexity predominate over residues 105–119 (AALAESEASEAAPVV). 2 disordered regions span residues 105–133 (AALA…EHRR) and 146–378 (KARQ…PTEP). 4 stretches are compositionally biased toward basic and acidic residues: residues 123 to 133 (EVARREEEHRR), 146 to 183 (KARQ…KAEE), 197 to 253 (EAPR…RAIR), and 266 to 278 (PAER…KKAE). The span at 288–302 (KPAGEARPAAAKKPA) shows a compositional bias: low complexity. Residues 303–313 (APAPAAAPAPG) show a composition bias toward pro residues. A tr-type G domain is found at 464-633 (TRPPVVTVMG…LLQAEVLELK (170 aa)). Residues 473 to 480 (GHVDHGKT) are G1. GTP is bound at residue 473–480 (GHVDHGKT). Positions 498-502 (GITQH) are G2. A G3 region spans residues 519 to 522 (DTPG). GTP is bound by residues 519–523 (DTPGH) and 573–576 (TKVD). Residues 573–576 (TKVD) are G4. Residues 609-611 (SAK) are G5.

The protein belongs to the TRAFAC class translation factor GTPase superfamily. Classic translation factor GTPase family. IF-2 subfamily.

The protein localises to the cytoplasm. Its function is as follows. One of the essential components for the initiation of protein synthesis. Protects formylmethionyl-tRNA from spontaneous hydrolysis and promotes its binding to the 30S ribosomal subunits. Also involved in the hydrolysis of GTP during the formation of the 70S ribosomal complex. The polypeptide is Translation initiation factor IF-2 (Ralstonia pickettii (strain 12J)).